The sequence spans 652 residues: Na(+)/H(+) antiporter NhaA 1 (652 aa).

Residues 1–427 (MTGELPRGRR…VGASLTTWLV (427 aa)) form a na(+)/H(+) antiporter NhaA region. Transmembrane regions (helical) follow at residues 27 to 47 (AFLH…VVAL), 78 to 98 (LRYW…GLEV), 114 to 134 (TLPL…YLAF), 142 to 162 (VGWG…LAVL), 173 to 193 (FLLT…AIAY), 200 to 220 (TALF…AAGG), 227 to 247 (LLLG…PVVV), 312 to 332 (LIVP…ELLA), 343 to 363 (VLFA…MLVA), 376 to 396 (WAAI…ALLI), and 411 to 431 (IGIL…FRLA). Residues 428–623 (FRLAARLPPA…LSAAVTSAFA (196 aa)) form the Thioredoxin domain. The segment at 626-652 (RLRPRDDREPDRRREVGSEQPDEEPGT) is disordered. Basic and acidic residues predominate over residues 628-642 (RPRDDREPDRRREVG).

It in the N-terminal section; belongs to the NhaA Na(+)/H(+) (TC 2.A.33) antiporter family.

It is found in the cell membrane. The catalysed reaction is Na(+)(in) + 2 H(+)(out) = Na(+)(out) + 2 H(+)(in). Na(+)/H(+) antiporter that extrudes sodium in exchange for external protons. The chain is Na(+)/H(+) antiporter NhaA 1 from Salinispora arenicola (strain CNS-205).